Consider the following 599-residue polypeptide: Fructan 1-exohydrolase (599 aa).

A signal peptide spans 1–16 (MAQAWAFLLLPALALA). The active site involves Asp-78. N-linked (GlcNAc...) asparagine glycosylation is found at Asn-171, Asn-239, and Asn-251. Cys-449 and Cys-495 are oxidised to a cystine.

Belongs to the glycosyl hydrolase 32 family.

The enzyme catalyses Hydrolysis of terminal, non-reducing (2-&gt;1)-linked beta-D-fructofuranose residues in fructans.. With respect to regulation, inhibited by sucrose. Hydrolyzes inulin-type beta-(2,1)-fructans. May play a role as a beta-(2,1)-trimmer during graminan biosynthesis. The chain is Fructan 1-exohydrolase from Hordeum vulgare (Barley).